Reading from the N-terminus, the 500-residue chain is Mucin-like protein 3 (500 aa).

Residues 1 to 27 (MAQPTSGLYSTFGFFICLLFFPASWEA) form the signal peptide. The Extracellular portion of the chain corresponds to 28–429 (GANTFQELQK…GENNSFPVWA (402 aa)). Disordered regions lie at residues 55–198 (THRA…SQKP) and 275–324 (EGKT…PTAS). The span at 58-71 (ASSDQKTSRQHPPD) shows a compositional bias: basic and acidic residues. The span at 76 to 89 (TATQKAKNQCNTTR) shows a compositional bias: polar residues. N108 carries N-linked (GlcNAc...) asparagine glycosylation. Basic and acidic residues-rich tracts occupy residues 111–123 (VRHE…EKDL) and 132–142 (ARNERSADDPR). The N-linked (GlcNAc...) asparagine glycan is linked to N148. Polar residues-rich tracts occupy residues 159–178 (PRRN…TTKS), 279–289 (SPASESSSQAQ), and 298–324 (TSAS…PTAS). The helical transmembrane segment at 430–450 (IVIVILMAVIILLVFIGLILL) threads the bilayer. The Cytoplasmic portion of the chain corresponds to 451-500 (VSCASRARHVLTQNSEEPEPQPEDKGSRNSYPVYLMEQQNLNLNQIPSPP).

Its subcellular location is the cell membrane. The protein localises to the cytoplasm. In terms of biological role, may modulate NF-kappaB signaling and play a role in cell growth. This Mus musculus (Mouse) protein is Mucin-like protein 3.